A 140-amino-acid polypeptide reads, in one-letter code: CBS domain-containing protein YhcV (140 aa).

2 CBS domains span residues Met8–Gly64 and Met72–Ala127.

The polypeptide is CBS domain-containing protein YhcV (yhcV) (Bacillus subtilis (strain 168)).